Reading from the N-terminus, the 83-residue chain is Toxin Aam1 (83 aa).

The signal sequence occupies residues 1–19 (MNYLVMISLALLLMIGVES). Positions 21–82 (RDGYIVYPHN…PIYDRSYKCY (62 aa)) constitute an LCN-type CS-alpha/beta domain. Intrachain disulfides connect Cys-31–Cys-81, Cys-35–Cys-53, Cys-39–Cys-63, and Cys-43–Cys-65.

This sequence belongs to the long (4 C-C) scorpion toxin superfamily. Sodium channel inhibitor family. Alpha subfamily. In terms of processing, the C-terminal basic residue is removed by a carboxypeptidase. In terms of tissue distribution, expressed by the venom gland.

It is found in the secreted. Functionally, alpha toxins bind voltage-independently at site-3 of sodium channels (Nav) and inhibit the inactivation of the activated channels, thereby blocking neuronal transmission. This is Toxin Aam1 (H1) from Androctonus amoreuxi (African fattail scorpion).